The chain runs to 477 residues: MPPQRSRRRKRASATQLYQTCKASGTCPPDVIPKVEGTTLADKILQWGSLGVFFGGLGIGTGAGTGGRTGYVPLGTRPPVIAEPGPAVRPPIAVDTVGPSDPSIVSLLEESSVIDAGITVPDITSHGGFNITTSTGGPASTPAILDISPPTNTIRVTTTTSTNPLYIDPFTLQPPLPAEVNGRLLISTPTITPHSYEEIPMDTFVVSTDTTNTFTSTPIPGPRSSARLGLYSRATQQRPVTTSAFLTSPARLVTYDNPAYEGLTEDTLVFEHPSIHTAPDPDFMDIVALHRPMLSSKQGSVRVSRIGQRLSMQTRRGTRFGSRVHFFHDLSPITHSSETIELQPLSASSVSAASNINDGLFDIYVDTSDVNVTNTTSSIPMHGFATPRLSTTSFPTLPSMSTHSANTTIPFSFPATVHVGPDLSVVDHPWDSTPTSVMPQGNFVMVSGWDFILHPSYFWRRRRKPVPYFFADVRVAA.

The Nuclear localization signal signature appears at 1–12 (MPPQRSRRRKRA). Cysteines 21 and 27 form a disulfide. The Nuclear localization signal signature appears at 459–466 (WRRRRKPV).

This sequence belongs to the papillomaviridae L2 protein family. In terms of assembly, interacts with major capsid protein L1. Interacts with E2; this interaction inhibits E2 transcriptional activity but not the DNA replication function E2. Interacts with host GADD45GIP1. Interacts with host HSPA8; this interaction is required for L2 nuclear translocation. Interacts with host importins KPNB2 and KPNB3. Forms a complex with importin alpha2-beta1 heterodimers via interaction with the importin alpha2 adapter. Interacts with host DYNLT1; this interaction is essential for virus intracellular transport during entry. Interacts (via C-terminus) with host retromer subunits VPS35 and VPS29. Post-translationally, highly phosphorylated.

It localises to the virion. The protein resides in the host nucleus. It is found in the host early endosome. Its subcellular location is the host Golgi apparatus. Minor protein of the capsid that localizes along the inner surface of the virion, within the central cavities beneath the L1 pentamers. Plays a role in capsid stabilization through interaction with the major capsid protein L1. Once the virion enters the host cell, L2 escorts the genomic DNA into the nucleus by promoting escape from the endosomal compartments and traffic through the host Golgi network. Mechanistically, the C-terminus of L2 possesses a cell-penetrating peptide that protudes from the host endosome, interacts with host cytoplasmic retromer cargo and thereby mediates the capsid delivery to the host trans-Golgi network. Plays a role through its interaction with host dynein in the intracellular microtubule-dependent transport of viral capsid toward the nucleus. Mediates the viral genome import into the nucleus through binding to host importins. Once within the nucleus, L2 localizes viral genomes to host PML bodies in order to activate early gene expression for establishment of infection. Later on, promotes late gene expression by interacting with the viral E2 protein and by inhibiting its transcriptional activation functions. During virion assembly, encapsidates the genome by direct interaction with the viral DNA. The sequence is that of Minor capsid protein L2 from Human papillomavirus 42.